The following is a 354-amino-acid chain: Dye-decolorizing peroxidase (354 aa).

Asp-165 serves as the catalytic Proton acceptor. His-238 serves as a coordination point for heme. The segment at 312 to 335 is targeting peptide; sequence GLFFSPTVDFLDDPPPLPAPGTPA. Pro residues predominate over residues 324-337; the sequence is DPPPLPAPGTPAAP. The interval 324 to 354 is disordered; that stretch reads DPPPLPAPGTPAAPPARNGSLSIGSLKGTTR. Residues 342–354 are compositionally biased toward polar residues; the sequence is GSLSIGSLKGTTR.

The protein belongs to the DyP-type peroxidase family. In terms of assembly, found in a complex with type 1 encapsulin, strongly suggesting it is found in a type 1 encapsulin nanocompartment. Homotetramer, presumably also in the type 1 encapsulin nanocompartment. Requires heme b as cofactor.

It localises to the encapsulin nanocompartment. The protein localises to the cell membrane. It carries out the reaction 2 a phenolic donor + H2O2 = 2 a phenolic radical donor + 2 H2O. In terms of biological role, cargo protein of a type 1 encapsulin nanocompartment. A heme-dependent peroxidase. This cargo-loaded encapsulin nanocompartment is probably involved in protection against oxidative damage. The sequence is that of Dye-decolorizing peroxidase from Mycolicibacterium paratuberculosis (strain ATCC BAA-968 / K-10) (Mycobacterium paratuberculosis).